The following is a 459-amino-acid chain: Ribosomal protein uS12 methylthiotransferase RimO (459 aa).

The interval 1–28 (MSTNPPDLRPDLAPKARLTQPDRPGQPT) is disordered. An MTTase N-terminal domain is found at 27–137 (PTIGMVSLGC…VLDAVHAAVP (111 aa)). 6 residues coordinate [4Fe-4S] cluster: cysteine 36, cysteine 72, cysteine 101, cysteine 168, cysteine 172, and cysteine 175. Positions 154-387 (LTPRHFSYLK…MAKSQDISEA (234 aa)) constitute a Radical SAM core domain. Positions 390 to 457 (AAKVAQRLEV…EYDLWGRLAP (68 aa)) constitute a TRAM domain.

It belongs to the methylthiotransferase family. RimO subfamily. The cofactor is [4Fe-4S] cluster.

The protein resides in the cytoplasm. The enzyme catalyses L-aspartate(89)-[ribosomal protein uS12]-hydrogen + (sulfur carrier)-SH + AH2 + 2 S-adenosyl-L-methionine = 3-methylsulfanyl-L-aspartate(89)-[ribosomal protein uS12]-hydrogen + (sulfur carrier)-H + 5'-deoxyadenosine + L-methionine + A + S-adenosyl-L-homocysteine + 2 H(+). Functionally, catalyzes the methylthiolation of an aspartic acid residue of ribosomal protein uS12. This is Ribosomal protein uS12 methylthiotransferase RimO from Roseobacter denitrificans (strain ATCC 33942 / OCh 114) (Erythrobacter sp. (strain OCh 114)).